The sequence spans 63 residues: DNA-directed RNA polymerases I, II, and III subunit RPABC4 (63 aa).

Zn(2+) contacts are provided by cysteine 24, cysteine 27, cysteine 41, and cysteine 44. The segment at 24–44 adopts a C4-type zinc-finger fold; that stretch reads CADCGARNTIQAKEVIRCREC.

The protein belongs to the archaeal Rpo12/eukaryotic RPC10 RNA polymerase subunit family. Component of the RNA polymerase I (Pol I), RNA polymerase II (Pol II) and RNA polymerase III (Pol III) complexes consisting of 14, 12 and 17 subunits, respectively.

The protein localises to the nucleus. In terms of biological role, DNA-dependent RNA polymerase catalyzes the transcription of DNA into RNA using the four ribonucleoside triphosphates as substrates. Common component of RNA polymerases I, II and III which synthesize ribosomal RNA precursors, mRNA precursors and many functional non-coding RNAs, and a small RNAs, such as 5S rRNA and tRNAs, respectively. This is DNA-directed RNA polymerases I, II, and III subunit RPABC4 (rpc10) from Schizosaccharomyces pombe (strain 972 / ATCC 24843) (Fission yeast).